The sequence spans 326 residues: Protein FAM50 homolog (326 aa).

Positions 76-112 (EISNRDLQVARGASSSTSLAKDSQEAREKEEHVAKHT) are disordered. Residues 97 to 109 (DSQEAREKEEHVA) show a composition bias toward basic and acidic residues.

This sequence belongs to the FAM50 family.

The polypeptide is Protein FAM50 homolog (Caenorhabditis briggsae).